We begin with the raw amino-acid sequence, 302 residues long: Sulfate adenylyltransferase subunit 2 (302 aa).

Belongs to the PAPS reductase family. CysD subfamily. As to quaternary structure, heterodimer composed of CysD, the smaller subunit, and CysN.

It catalyses the reaction sulfate + ATP + H(+) = adenosine 5'-phosphosulfate + diphosphate. It participates in sulfur metabolism; hydrogen sulfide biosynthesis; sulfite from sulfate: step 1/3. In terms of biological role, with CysN forms the ATP sulfurylase (ATPS) that catalyzes the adenylation of sulfate producing adenosine 5'-phosphosulfate (APS) and diphosphate, the first enzymatic step in sulfur assimilation pathway. APS synthesis involves the formation of a high-energy phosphoric-sulfuric acid anhydride bond driven by GTP hydrolysis by CysN coupled to ATP hydrolysis by CysD. This Klebsiella pneumoniae (strain 342) protein is Sulfate adenylyltransferase subunit 2.